We begin with the raw amino-acid sequence, 212 residues long: Calaxin (212 aa).

EF-hand domains lie at 65 to 100, 101 to 136, and 146 to 181; these read TDDM…FLRG, TLEE…SLLK, and GIKD…ETLL. Residues Asp78, Asp80, Asp82, Cys84, Glu89, Asp114, Asn116, Asp118, Glu125, Asp159, Asp161, Asp163, Lys165, and Asp170 each contribute to the Ca(2+) site.

Component of the outer dynein arm-docking complex along with ODAD1, ODAD2, ODAD3 and ODAD4. As to expression, expressed in trachea multiciliated cells.

It is found in the cytoplasm. It localises to the cytoskeleton. Its subcellular location is the cilium axoneme. The protein resides in the cell projection. The protein localises to the cilium. It is found in the flagellum. Its function is as follows. Component of the outer dynein arm-docking complex (ODA-DC) that mediates outer dynein arms (ODA) binding onto the doublet microtubule. Seems to regulate the assembly of both ODAs and their axonemal docking complex onto ciliary microtubules. Regulates ciliary and flagellar motility and is required for cilia-driven determination of body laterality. In Bos taurus (Bovine), this protein is Calaxin (CLXN).